Reading from the N-terminus, the 262-residue chain is Acyl-[acyl-carrier-protein]--UDP-N-acetylglucosamine O-acyltransferase (262 aa).

This sequence belongs to the transferase hexapeptide repeat family. LpxA subfamily. As to quaternary structure, homotrimer.

Its subcellular location is the cytoplasm. The catalysed reaction is a (3R)-hydroxyacyl-[ACP] + UDP-N-acetyl-alpha-D-glucosamine = a UDP-3-O-[(3R)-3-hydroxyacyl]-N-acetyl-alpha-D-glucosamine + holo-[ACP]. Its pathway is glycolipid biosynthesis; lipid IV(A) biosynthesis; lipid IV(A) from (3R)-3-hydroxytetradecanoyl-[acyl-carrier-protein] and UDP-N-acetyl-alpha-D-glucosamine: step 1/6. Functionally, involved in the biosynthesis of lipid A, a phosphorylated glycolipid that anchors the lipopolysaccharide to the outer membrane of the cell. The protein is Acyl-[acyl-carrier-protein]--UDP-N-acetylglucosamine O-acyltransferase of Salmonella typhi.